A 669-amino-acid chain; its full sequence is Methionine--tRNA ligase (669 aa).

Positions 14 to 24 (YYPSGKLHIGN) match the 'HIGH' region motif. Residue His161 coordinates Zn(2+). The short motif at 309–313 (KMSKS) is the 'KMSKS' region element. Lys312 serves as a coordination point for ATP. Positions 566–669 (DFDKVELKVA…KEMPNGAGIA (104 aa)) constitute a tRNA-binding domain.

Belongs to the class-I aminoacyl-tRNA synthetase family. MetG type 2B subfamily. As to quaternary structure, homodimer.

It is found in the cytoplasm. The enzyme catalyses tRNA(Met) + L-methionine + ATP = L-methionyl-tRNA(Met) + AMP + diphosphate. Is required not only for elongation of protein synthesis but also for the initiation of all mRNA translation through initiator tRNA(fMet) aminoacylation. The polypeptide is Methionine--tRNA ligase (Enterococcus faecalis (strain ATCC 700802 / V583)).